Consider the following 173-residue polypeptide: Alpha-crystallin A chain (173 aa).

N-acetylmethionine is present on M1. A required for complex formation with BFSP1 and BFSP2 region spans residues 1–63; it reads MDIAIQHPWF…RTVLDSGISE (63 aa). Q6 bears the Deamidated glutamine; partial mark. K11 is a glycosylation site (N-linked (Glc) (glycation) lysine). A Phosphoserine modification is found at S45. Position 50 is a deamidated glutamine; partial (Q50). Residues 52-162 enclose the sHSP domain; that stretch reads LFRTVLDSGI…GHSERAIPVS (111 aa). K70 is subject to N6-acetyllysine. N-linked (Glc) (glycation) lysine glycosylation occurs at K78. Q90 bears the Deamidated glutamine; partial mark. At K99 the chain carries N6-acetyllysine. H100 is a binding site for Zn(2+). N101 is modified (deamidated asparagine; partial). The Zn(2+) site is built by E102 and H107. Phosphoserine is present on S122. A Deamidated asparagine; partial modification is found at N123. Residues 144-173 form a disordered region; the sequence is PKIPSGVDAGHSERAIPVSREEKPSSAPSS. The segment covering 153–167 has biased composition (basic and acidic residues); that stretch reads GHSERAIPVSREEKP. A Zn(2+)-binding site is contributed by H154. An important for oligomerization region spans residues 157–163; it reads RAIPVSR. Residue S162 is glycosylated (O-linked (GlcNAc) serine).

Belongs to the small heat shock protein (HSP20) family. Heteromer composed of three CRYAA and one CRYAB subunits. Inter-subunit bridging via zinc ions enhances stability, which is crucial as there is no protein turn over in the lens. Can also form homodimers and homotetramers (dimers of dimers) which serve as the building blocks of homooligomers. Within homooligomers, the zinc-binding motif is created from residues of 3 different molecules. His-100 and Glu-102 from one molecule are ligands of the zinc ion, and His-107 and His-154 residues from additional molecules complete the site with tetrahedral coordination geometry. Part of a complex required for lens intermediate filament formation composed of BFSP1, BFSP2 and CRYAA. Post-translationally, acetylation at Lys-70 may increase chaperone activity. Undergoes age-dependent proteolytical cleavage at the C-terminus.

Its subcellular location is the cytoplasm. The protein localises to the nucleus. Contributes to the transparency and refractive index of the lens. Acts as a chaperone, preventing aggregation of various proteins under a wide range of stress conditions. Required for the correct formation of lens intermediate filaments as part of a complex composed of BFSP1, BFSP2 and CRYAA. This chain is Alpha-crystallin A chain (CRYAA), found in Bos taurus (Bovine).